Reading from the N-terminus, the 219-residue chain is Protein-L-isoaspartate O-methyltransferase (219 aa).

Residue Ser-67 is part of the active site.

The protein belongs to the methyltransferase superfamily. L-isoaspartyl/D-aspartyl protein methyltransferase family.

The protein localises to the cytoplasm. The enzyme catalyses [protein]-L-isoaspartate + S-adenosyl-L-methionine = [protein]-L-isoaspartate alpha-methyl ester + S-adenosyl-L-homocysteine. Functionally, catalyzes the methyl esterification of L-isoaspartyl residues in peptides and proteins that result from spontaneous decomposition of normal L-aspartyl and L-asparaginyl residues. It plays a role in the repair and/or degradation of damaged proteins. The polypeptide is Protein-L-isoaspartate O-methyltransferase (Cereibacter sphaeroides (strain ATCC 17029 / ATH 2.4.9) (Rhodobacter sphaeroides)).